A 177-amino-acid polypeptide reads, in one-letter code: ATP synthase subunit delta (177 aa).

The protein belongs to the ATPase delta chain family. F-type ATPases have 2 components, F(1) - the catalytic core - and F(0) - the membrane proton channel. F(1) has five subunits: alpha(3), beta(3), gamma(1), delta(1), epsilon(1). F(0) has three main subunits: a(1), b(2) and c(10-14). The alpha and beta chains form an alternating ring which encloses part of the gamma chain. F(1) is attached to F(0) by a central stalk formed by the gamma and epsilon chains, while a peripheral stalk is formed by the delta and b chains.

It is found in the cell inner membrane. F(1)F(0) ATP synthase produces ATP from ADP in the presence of a proton or sodium gradient. F-type ATPases consist of two structural domains, F(1) containing the extramembraneous catalytic core and F(0) containing the membrane proton channel, linked together by a central stalk and a peripheral stalk. During catalysis, ATP synthesis in the catalytic domain of F(1) is coupled via a rotary mechanism of the central stalk subunits to proton translocation. In terms of biological role, this protein is part of the stalk that links CF(0) to CF(1). It either transmits conformational changes from CF(0) to CF(1) or is implicated in proton conduction. The sequence is that of ATP synthase subunit delta from Vibrio alginolyticus.